The chain runs to 414 residues: Nucleoporin NUP42 (414 aa).

The segment at 1-25 (MPVCNFFLQGRCRYGDTCWNEHPTG) adopts a C3H1-type zinc-finger fold. Disordered stretches follow at residues 24 to 73 (TGGR…RGAA) and 200 to 221 (PPASAPGFGSPGPGFGSATSGF). FG repeat units follow at residues 43 to 44 (FG), 207 to 208 (FG), 214 to 215 (FG), 221 to 222 (FG), 233 to 234 (FG), 238 to 239 (FG), 257 to 258 (FG), 268 to 269 (FG), 280 to 281 (FG), 306 to 307 (FG), 325 to 326 (FG), 329 to 330 (FG), 335 to 336 (FG), 341 to 342 (FG), 347 to 348 (FG), 351 to 352 (FG), and 362 to 363 (FG).

In terms of assembly, probable component of the nuclear pore complex (NPC).

It localises to the nucleus. It is found in the nuclear pore complex. The protein resides in the nucleus membrane. Functionally, required for the export of mRNAs containing poly(A) tails from the nucleus into the cytoplasm. The polypeptide is Nucleoporin NUP42 (nup42) (Danio rerio (Zebrafish)).